Consider the following 888-residue polypeptide: Valine--tRNA ligase (888 aa).

Residues 43-53 (PFTSGTLHLGH) carry the 'HIGH' region motif. The 'KMSKS' region motif lies at 534–538 (KMSKS). K537 provides a ligand contact to ATP.

It belongs to the class-I aminoacyl-tRNA synthetase family. ValS type 2 subfamily.

The protein resides in the cytoplasm. The enzyme catalyses tRNA(Val) + L-valine + ATP = L-valyl-tRNA(Val) + AMP + diphosphate. Functionally, catalyzes the attachment of valine to tRNA(Val). As ValRS can inadvertently accommodate and process structurally similar amino acids such as threonine, to avoid such errors, it has a 'posttransfer' editing activity that hydrolyzes mischarged Thr-tRNA(Val) in a tRNA-dependent manner. In Thermococcus kodakarensis (strain ATCC BAA-918 / JCM 12380 / KOD1) (Pyrococcus kodakaraensis (strain KOD1)), this protein is Valine--tRNA ligase.